Reading from the N-terminus, the 88-residue chain is Pape peptide (88 aa).

Residues 1-22 (MNRKTLLVIFFVTLLIAEEVNS) form the signal peptide. Residues 23 to 45 (FRLGGFLKKIWRSKLVKRLRSKG) constitute a propeptide that is removed on maturation. Positions 49–88 (LKEALAPEPAPEPAPEPAPEAAPEAAPEPAAAAPERRRRR) are disordered. Positions 56–68 (EPAPEPAPEPAPE) are enriched in pro residues. PAPE repeat units lie at residues 57–60 (PAPE), 61–64 (PAPE), and 65–68 (PAPE). Over residues 69-81 (AAPEAAPEPAAAA) the composition is skewed to low complexity.

Expressed by the venom gland.

It localises to the secreted. This Tityus serrulatus (Brazilian scorpion) protein is Pape peptide.